A 635-amino-acid polypeptide reads, in one-letter code: Beta-mannosyltransferase 2 (635 aa).

Over 1-6 (MRTRLN) the chain is Cytoplasmic. Residues 7–27 (FLLLCIASVLSVIWIGVLLTW) form a helical membrane-spanning segment. The Extracellular segment spans residues 28–635 (NDNNLGGISL…EKKEAEKKGK (608 aa)). Asparagine 484 carries N-linked (GlcNAc...) asparagine glycosylation. Residues 512–635 (TRGEAERRRR…EKKEAEKKGK (124 aa)) adopt a coiled-coil conformation. The tract at residues 517-635 (ERRRRVAEER…EKKEAEKKGK (119 aa)) is disordered.

Belongs to the BMT family.

The protein localises to the membrane. Beta-mannosyltransferase involved in cell wall biosynthesis. Initiates the beta-mannosylation of core N-linked glycans. This Komagataella phaffii (strain ATCC 76273 / CBS 7435 / CECT 11047 / NRRL Y-11430 / Wegner 21-1) (Yeast) protein is Beta-mannosyltransferase 2 (BMT2).